The sequence spans 465 residues: Monogalactosyldiacylglycerol synthase 3, chloroplastic (465 aa).

Residues histidine 86, arginine 255, 365-369, and glutamate 387 contribute to the UDP site; that span reads GTIAE.

The protein belongs to the glycosyltransferase 28 family. As to expression, expressed mainly in roots. Detected in flowers, leaves, stems, siliques and pollen tubes.

Its subcellular location is the plastid. The protein localises to the chloroplast outer membrane. It catalyses the reaction a 1,2-diacyl-sn-glycerol + UDP-alpha-D-galactose = a 1,2-diacyl-3-O-(beta-D-galactosyl)-sn-glycerol + UDP + H(+). It carries out the reaction 1,2-di-(9Z,12Z-octadecadienoyl)-sn-glycerol + UDP-alpha-D-galactose = 1,2-di-(9Z,12Z-octadecadienoyl)-3-beta-D-galactosyl-sn-glycerol + UDP + H(+). The enzyme catalyses 1-(9Z-octadecenoyl)-2-hexadecanoyl-sn-glycerol + UDP-alpha-D-galactose = 1-(9Z-octadecenoyl)-2-hexadecanoyl-3-beta-D-galactosyl-sn-glycerol + UDP + H(+). The catalysed reaction is 1,2-di-(9Z-octadecenoyl)-sn-glycerol + UDP-alpha-D-galactose = 1,2-di-(9Z-octadecenoyl)-3-beta-D-galactosyl-sn-glycerol + UDP + H(+). With respect to regulation, inhibited by galvestine-1. Functionally, involved in the synthesis of monogalactosyldiacylglycerol, the major structural component of photosynthetic membranes and in the chloroplast envelope biogenesis. Can use both prokaryotic (18:1/16:0) or eukaryotic (18:2/18:2) 1,2-diacylglycerol species, but operates with some preference for the eukaryotic one. Plays a minor role in galactolipid synthesis in chloroplasts. Is essential for membrane lipid remodeling in phosphate-starved roots. Acts as the major factor involved in digalactosyldiacylglycerol (DGDG) biosynthesis in phosphate-starved roots. Does not seem to be required for plant growth under nutrient-sufficient conditions. Required for membrane lipid remodeling in plants grown in acidic conditions. The protein is Monogalactosyldiacylglycerol synthase 3, chloroplastic of Arabidopsis thaliana (Mouse-ear cress).